Here is a 287-residue protein sequence, read N- to C-terminus: MASLKSIKKRIVSVKNTRQITKAMKMVSAAKLRRAQENVVAARPYAKKLGEVLDRLAKSQDGSSSPLLQKRISQKALLVVVTSDRGLCGGFNANICKAAERFIREKKAEFAEISVTTVGRKGFEFLKNRQKIHKNYGNVLSNLSYPTAALLAQEVVEGYVAEEYDEVYLLFNAFRSVMSQDITLQQLLPIVPEETAEEEYVPEYIYEPSKGELLDELLPKHIEVQVFKALLESVASEHGARMTAMDSASKNATEMIGKLTLQYNRARQAAITTELMEIISGAESIKG.

Belongs to the ATPase gamma chain family. F-type ATPases have 2 components, CF(1) - the catalytic core - and CF(0) - the membrane proton channel. CF(1) has five subunits: alpha(3), beta(3), gamma(1), delta(1), epsilon(1). CF(0) has three main subunits: a, b and c.

The protein resides in the cell inner membrane. Functionally, produces ATP from ADP in the presence of a proton gradient across the membrane. The gamma chain is believed to be important in regulating ATPase activity and the flow of protons through the CF(0) complex. This chain is ATP synthase gamma chain, found in Geobacter metallireducens (strain ATCC 53774 / DSM 7210 / GS-15).